The sequence spans 230 residues: UPF0494 membrane protein C1348.07 (230 aa).

The next 3 helical transmembrane spans lie at 78 to 98 (WPLL…NFEV), 120 to 140 (IWGP…GLIY), and 148 to 168 (AIPL…VAMV).

This sequence belongs to the UPF0494 family.

The protein resides in the vacuole. Its subcellular location is the membrane. This chain is UPF0494 membrane protein C1348.07, found in Schizosaccharomyces pombe (strain 972 / ATCC 24843) (Fission yeast).